Here is a 95-residue protein sequence, read N- to C-terminus: Aspartyl/glutamyl-tRNA(Asn/Gln) amidotransferase subunit C (95 aa).

The protein belongs to the GatC family. In terms of assembly, heterotrimer of A, B and C subunits.

It catalyses the reaction L-glutamyl-tRNA(Gln) + L-glutamine + ATP + H2O = L-glutaminyl-tRNA(Gln) + L-glutamate + ADP + phosphate + H(+). The catalysed reaction is L-aspartyl-tRNA(Asn) + L-glutamine + ATP + H2O = L-asparaginyl-tRNA(Asn) + L-glutamate + ADP + phosphate + 2 H(+). In terms of biological role, allows the formation of correctly charged Asn-tRNA(Asn) or Gln-tRNA(Gln) through the transamidation of misacylated Asp-tRNA(Asn) or Glu-tRNA(Gln) in organisms which lack either or both of asparaginyl-tRNA or glutaminyl-tRNA synthetases. The reaction takes place in the presence of glutamine and ATP through an activated phospho-Asp-tRNA(Asn) or phospho-Glu-tRNA(Gln). This Thermodesulfovibrio yellowstonii (strain ATCC 51303 / DSM 11347 / YP87) protein is Aspartyl/glutamyl-tRNA(Asn/Gln) amidotransferase subunit C.